The sequence spans 609 residues: NADH-ubiquinone oxidoreductase chain 5 (609 aa).

The next 16 membrane-spanning stretches (helical) occupy residues valine 3 to valine 23, alanine 46 to isoleucine 66, methionine 90 to tyrosine 110, proline 115 to valine 135, leucine 140 to tryptophan 160, alanine 174 to isoleucine 194, leucine 216 to leucine 236, threonine 244 to isoleucine 264, methionine 276 to leucine 296, isoleucine 304 to asparagine 323, alanine 328 to isoleucine 350, valine 368 to phenylalanine 388, tryptophan 410 to phenylalanine 432, leucine 460 to threonine 480, methionine 485 to leucine 505, and glycine 585 to isoleucine 605.

Belongs to the complex I subunit 5 family.

It localises to the mitochondrion inner membrane. The catalysed reaction is a ubiquinone + NADH + 5 H(+)(in) = a ubiquinol + NAD(+) + 4 H(+)(out). Functionally, core subunit of the mitochondrial membrane respiratory chain NADH dehydrogenase (Complex I) that is believed to belong to the minimal assembly required for catalysis. Complex I functions in the transfer of electrons from NADH to the respiratory chain. The immediate electron acceptor for the enzyme is believed to be ubiquinone. This is NADH-ubiquinone oxidoreductase chain 5 (MT-ND5) from Phoca vitulina (Harbor seal).